The sequence spans 726 residues: Catalase-peroxidase (726 aa).

Residues 1-25 form a disordered region; sequence MDAKTDDSAGKCPFTGGGRRGHRNR. The segment at residues 96-218 is a cross-link (tryptophyl-tyrosyl-methioninium (Trp-Tyr) (with M-244)); it reads WHSAGTYRIT…LAAVQMGLIY (123 aa). His97 functions as the Proton acceptor in the catalytic mechanism. The tryptophyl-tyrosyl-methioninium (Tyr-Met) (with W-96) cross-link spans 218–244; the sequence is YVNPEGPNGNPDPVAAAKDIRETFYRM. Position 259 (His259) interacts with heme b.

The protein belongs to the peroxidase family. Peroxidase/catalase subfamily. Homodimer or homotetramer. It depends on heme b as a cofactor. Post-translationally, formation of the three residue Trp-Tyr-Met cross-link is important for the catalase, but not the peroxidase activity of the enzyme.

The enzyme catalyses H2O2 + AH2 = A + 2 H2O. It carries out the reaction 2 H2O2 = O2 + 2 H2O. In terms of biological role, bifunctional enzyme with both catalase and broad-spectrum peroxidase activity. The protein is Catalase-peroxidase of Chelativorans sp. (strain BNC1).